The following is a 401-amino-acid chain: Imidazolonepropionase (401 aa).

Fe(3+) is bound by residues H70 and H72. Residues H70 and H72 each contribute to the Zn(2+) site. 4-imidazolone-5-propanoate-binding residues include R79, Y142, and H175. Y142 lines the N-formimidoyl-L-glutamate pocket. H240 contacts Fe(3+). H240 is a binding site for Zn(2+). Q243 contacts 4-imidazolone-5-propanoate. D315 contacts Fe(3+). D315 serves as a coordination point for Zn(2+). N-formimidoyl-L-glutamate-binding residues include N317 and G319. Residue S320 coordinates 4-imidazolone-5-propanoate.

Belongs to the metallo-dependent hydrolases superfamily. HutI family. Zn(2+) is required as a cofactor. The cofactor is Fe(3+).

The protein localises to the cytoplasm. It carries out the reaction 4-imidazolone-5-propanoate + H2O = N-formimidoyl-L-glutamate. It functions in the pathway amino-acid degradation; L-histidine degradation into L-glutamate; N-formimidoyl-L-glutamate from L-histidine: step 3/3. Functionally, catalyzes the hydrolytic cleavage of the carbon-nitrogen bond in imidazolone-5-propanoate to yield N-formimidoyl-L-glutamate. It is the third step in the universal histidine degradation pathway. This chain is Imidazolonepropionase, found in Ruegeria pomeroyi (strain ATCC 700808 / DSM 15171 / DSS-3) (Silicibacter pomeroyi).